The following is a 320-amino-acid chain: Short-chain dehydrogenase/reductase ATR7 (320 aa).

Positions 32, 34, 55, 70, 93, 134, 167, 171, and 202 each coordinate NADP(+). Tyr167 serves as the catalytic Proton acceptor. The Lowers pKa of active site Tyr role is filled by Lys171.

The protein belongs to the short-chain dehydrogenases/reductases (SDR) family.

Its pathway is mycotoxin biosynthesis. Short-chain dehydrogenase/reductase; part of the core atranone cluster (CAC) which products are predicted to catalyze most or all steps of mycotoxin atranone synthesis, starting from geranylgeranyl pyrophosphate (GGPP). The initial cyclization of GGPP to dolabellane is probably performed by the terpene cyclase ATR13. The Baeyer-Villiger oxidation near the end of the atranone synthesis, which converts atranones D and E to atranones F and G is predicted to be catalyzed by the monooxygenase ATR8. Of the CAC's other predicted gene products, the reducing PKS ATR6 might synthesize a polyketide chain. This polyketide is probably transferred onto the atranone backbone by the polyketide transferase ATR5. Other predicted CAC products include 4 oxygenases (ATR2, ATR3, ATR4, and ATR14), 3 short-chain reductases (ATR7, ATR9, and ATR10), and a methyltransferase (ATR12). These may all be involved in the various steps of atranone biosynthesis, although their specific roles must await experimental determination. This Stachybotrys chlorohalonatus (strain IBT 40285) protein is Short-chain dehydrogenase/reductase ATR7.